Reading from the N-terminus, the 401-residue chain is Imidazolonepropionase (401 aa).

Fe(3+) is bound by residues His66 and His68. Zn(2+)-binding residues include His66 and His68. 3 residues coordinate 4-imidazolone-5-propanoate: Arg75, Tyr138, and His171. Tyr138 provides a ligand contact to N-formimidoyl-L-glutamate. His236 serves as a coordination point for Fe(3+). His236 lines the Zn(2+) pocket. Gln239 contributes to the 4-imidazolone-5-propanoate binding site. Asp311 contacts Fe(3+). Asp311 lines the Zn(2+) pocket. 2 residues coordinate N-formimidoyl-L-glutamate: Asn313 and Gly315. Thr316 contributes to the 4-imidazolone-5-propanoate binding site.

The protein belongs to the metallo-dependent hydrolases superfamily. HutI family. It depends on Zn(2+) as a cofactor. Fe(3+) is required as a cofactor.

Its subcellular location is the cytoplasm. It catalyses the reaction 4-imidazolone-5-propanoate + H2O = N-formimidoyl-L-glutamate. The protein operates within amino-acid degradation; L-histidine degradation into L-glutamate; N-formimidoyl-L-glutamate from L-histidine: step 3/3. Functionally, catalyzes the hydrolytic cleavage of the carbon-nitrogen bond in imidazolone-5-propanoate to yield N-formimidoyl-L-glutamate. It is the third step in the universal histidine degradation pathway. This chain is Imidazolonepropionase, found in Acinetobacter baumannii (strain ATCC 17978 / DSM 105126 / CIP 53.77 / LMG 1025 / NCDC KC755 / 5377).